A 1478-amino-acid chain; its full sequence is GTPase-activating protein and VPS9 domain-containing protein 1 (1478 aa).

In terms of domain architecture, Ras-GAP spans 147–385 (SYLLQVLRYL…AAFLDVVIGG (239 aa)). Phosphoserine is present on Ser227. Thr390 and Thr458 each carry phosphothreonine. Residue Tyr460 is modified to Phosphotyrosine. Position 466 is a phosphoserine (Ser466). At Thr470 the chain carries Phosphothreonine. Phosphoserine is present on residues Ser566 and Ser569. 3 disordered regions span residues 574–608 (GISE…GSNG), 739–820 (ESCS…PPSQ), and 846–874 (HYAR…LPNF). Residues 578 to 588 (GPSNRSNSVSS) are compositionally biased toward polar residues. Phosphoserine is present on residues Ser742, Ser746, and Ser757. Polar residues predominate over residues 758–777 (SRPSTPGLSVVSGISATSED). The residue at position 762 (Thr762) is a Phosphothreonine. The residue at position 766 (Ser766) is a Phosphoserine. Basic and acidic residues predominate over residues 778–789 (IPNKIEDLRSEC). Phosphoserine occurs at positions 876, 902, 903, 908, 914, and 966. Residues 889–902 (QRHSYPERLVRSRS) are compositionally biased toward basic and acidic residues. Disordered regions lie at residues 889–1023 (QRHS…PRLS) and 1043–1064 (TSPS…DRDL). Composition is skewed to basic and acidic residues over residues 954–975 (DSSR…DRNR) and 997–1008 (EKQEKDKDDLGP). Residues 1012 to 1023 (STLTDDPSPRLS) show a composition bias toward polar residues. Ser1019, Ser1046, Ser1096, and Ser1103 each carry phosphoserine. The VPS9 domain maps to 1338-1478 (ILRDQVLHEH…EFIKTIDDRK (141 aa)).

The protein belongs to the GAPVD1 family. As to quaternary structure, interacts with TRIP10/CIP4. Interacts with RAB5A. In terms of assembly, (Microbial infection) Interacts with P.falciparum (strain 3D7) CK1. In terms of tissue distribution, expressed in erythrocytes (at protein level).

Its subcellular location is the membrane. The protein resides in the endosome. Functionally, acts both as a GTPase-activating protein (GAP) and a guanine nucleotide exchange factor (GEF), and participates in various processes such as endocytosis, insulin receptor internalization or LC2A4/GLUT4 trafficking. Acts as a GEF for the Ras-related protein RAB31 by exchanging bound GDP for free GTP, leading to regulate LC2A4/GLUT4 trafficking. In the absence of insulin, it maintains RAB31 in an active state and promotes a futile cycle between LC2A4/GLUT4 storage vesicles and early endosomes, retaining LC2A4/GLUT4 inside the cells. Upon insulin stimulation, it is translocated to the plasma membrane, releasing LC2A4/GLUT4 from intracellular storage vesicles. Also involved in EGFR trafficking and degradation, possibly by promoting EGFR ubiquitination and subsequent degradation by the proteasome. Has GEF activity for Rab5 and GAP activity for Ras. The protein is GTPase-activating protein and VPS9 domain-containing protein 1 (GAPVD1) of Homo sapiens (Human).